The sequence spans 306 residues: Aspartate carbamoyltransferase catalytic subunit (306 aa).

Residues arginine 55 and threonine 56 each contribute to the carbamoyl phosphate site. Residue lysine 84 coordinates L-aspartate. 3 residues coordinate carbamoyl phosphate: arginine 105, histidine 133, and glutamine 136. 2 residues coordinate L-aspartate: arginine 166 and arginine 227. 2 residues coordinate carbamoyl phosphate: leucine 265 and proline 266.

This sequence belongs to the aspartate/ornithine carbamoyltransferase superfamily. ATCase family. Heterododecamer (2C3:3R2) of six catalytic PyrB chains organized as two trimers (C3), and six regulatory PyrI chains organized as three dimers (R2).

It carries out the reaction carbamoyl phosphate + L-aspartate = N-carbamoyl-L-aspartate + phosphate + H(+). Its pathway is pyrimidine metabolism; UMP biosynthesis via de novo pathway; (S)-dihydroorotate from bicarbonate: step 2/3. Functionally, catalyzes the condensation of carbamoyl phosphate and aspartate to form carbamoyl aspartate and inorganic phosphate, the committed step in the de novo pyrimidine nucleotide biosynthesis pathway. This Neisseria gonorrhoeae (strain ATCC 700825 / FA 1090) protein is Aspartate carbamoyltransferase catalytic subunit.